Here is a 256-residue protein sequence, read N- to C-terminus: Ribonuclease HII (256 aa).

One can recognise an RNase H type-2 domain in the interval 72–256; sequence QYIAGMDEVG…SFNPVPKYLN (185 aa). Positions 78, 79, and 170 each coordinate a divalent metal cation.

Belongs to the RNase HII family. The cofactor is Mn(2+). Mg(2+) serves as cofactor.

The protein localises to the cytoplasm. It catalyses the reaction Endonucleolytic cleavage to 5'-phosphomonoester.. In terms of biological role, endonuclease that specifically degrades the RNA of RNA-DNA hybrids. This chain is Ribonuclease HII, found in Limosilactobacillus reuteri (strain DSM 20016) (Lactobacillus reuteri).